We begin with the raw amino-acid sequence, 117 residues long: MGWSCIMLFLAATATGVHSQVQLQQPGAELVKPGASVKLSCKASGYTFTSYWMHWVKQRPGRGLEWIGRIDPNSGGTKYNEKFKSKATLTVDTSSSTAYMQLHSLTSEDSAVYYCAR.

A signal peptide spans 1–19 (MGWSCIMLFLAATATGVHS). Positions 20-49 (QVQLQQPGAELVKPGASVKLSCKASGYTFT) are framework-1. A disulfide bond links cysteine 41 and cysteine 115. Residues 50-54 (SYWMH) form a complementarity-determining-1 region. A framework-2 region spans residues 55–68 (WVKQRPGRGLEWIG). The tract at residues 69–85 (RIDPNSGGTKYNEKFKS) is complementarity-determining-2. Positions 86 to 117 (KATLTVDTSSSTAYMQLHSLTSEDSAVYYCAR) are framework-3.

This chain is Ig heavy chain V region 186-1, found in Mus musculus (Mouse).